Reading from the N-terminus, the 681-residue chain is U3 small nucleolar ribonucleoprotein protein MPP10 (681 aa).

Residues serine 61, serine 120, and serine 140 each carry the phosphoserine modification. Residues 109–139 (ECEDEECEEDASEVEADNQENLETDLDEEQL) adopt a coiled-coil conformation. A compositionally biased stretch (acidic residues) spans 111-144 (EDEECEEDASEVEADNQENLETDLDEEQLSDEGG). Disordered stretches follow at residues 111-202 (EDEE…SVVD), 215-256 (LEKV…GRQK), and 268-365 (YKDF…EKRQ). Positions 145 to 163 (DVPKGRDRAKSSRKSDPRK) are enriched in basic and acidic residues. Serine 164, serine 168, and serine 172 each carry phosphoserine. Residues 215–227 (LEKVEKEEEKRPD) are compositionally biased toward basic and acidic residues. Composition is skewed to acidic residues over residues 228–248 (GEEE…DESE) and 273–322 (DPVE…EDEN). Phosphoserine occurs at positions 244, 247, 277, and 346. Residues 349–383 (AVKQESDEVKSSFEKRQEKMNEKIASLEKELLDKK) are a coiled coil. Lysine 351 is covalently cross-linked (Glycyl lysine isopeptide (Lys-Gly) (interchain with G-Cter in SUMO2)). Residues 352–365 (QESDEVKSSFEKRQ) are compositionally biased toward basic and acidic residues. Residues lysine 383 and lysine 395 each participate in a glycyl lysine isopeptide (Lys-Gly) (interchain with G-Cter in SUMO2) cross-link. Residues 471–491 (AEIYEQEYLKLNQQKTEEEDN) are a coiled coil. Lysine 556 is covalently cross-linked (Glycyl lysine isopeptide (Lys-Gly) (interchain with G-Cter in SUMO2)). Basic and acidic residues predominate over residues 560–576 (KAGDLKTAAEKTATDKK). The tract at residues 560-644 (KAGDLKTAAE…RKDKPLKSSQ (85 aa)) is disordered. The stretch at 575–604 (KKRERRKKKYQKRLKIKEKEKRKKLLEKNN) forms a coiled coil. Over residues 577–599 (RERRKKKYQKRLKIKEKEKRKKL) the composition is skewed to basic residues. The residue at position 609 (lysine 609) is an N6-acetyllysine. Basic and acidic residues predominate over residues 630–640 (LLKDERKDKPL). Glycyl lysine isopeptide (Lys-Gly) (interchain with G-Cter in SUMO2) cross-links involve residues lysine 632 and lysine 649. A disordered region spans residues 657-681 (QINDAKQPEKIKKKKQDISVHKLKL). A compositionally biased stretch (basic and acidic residues) spans 662–681 (KQPEKIKKKKQDISVHKLKL).

This sequence belongs to the MPP10 family. As to quaternary structure, part of the small subunit (SSU) processome, composed of more than 70 proteins and the RNA chaperone small nucleolar RNA (snoRNA) U3. Component of a heterotrimeric complex containing IMP3, IMP4 and MPHOSPH10. Interacts with IMP3 and IMP4. In terms of processing, phosphorylated in M (mitotic) phase.

It is found in the nucleus. The protein resides in the nucleolus. The protein localises to the chromosome. Its function is as follows. Component of the 60-80S U3 small nucleolar ribonucleoprotein (U3 snoRNP). Required for the early cleavages during pre-18S ribosomal RNA processing. Part of the small subunit (SSU) processome, first precursor of the small eukaryotic ribosomal subunit. During the assembly of the SSU processome in the nucleolus, many ribosome biogenesis factors, an RNA chaperone and ribosomal proteins associate with the nascent pre-rRNA and work in concert to generate RNA folding, modifications, rearrangements and cleavage as well as targeted degradation of pre-ribosomal RNA by the RNA exosome. The sequence is that of U3 small nucleolar ribonucleoprotein protein MPP10 (Mphosph10) from Mus musculus (Mouse).